An 81-amino-acid polypeptide reads, in one-letter code: Photosystem I iron-sulfur center (81 aa).

4Fe-4S ferredoxin-type domains follow at residues 2–31 (SHSV…MVPW) and 37–68 (GQIA…VRVY). 8 residues coordinate [4Fe-4S] cluster: Cys11, Cys14, Cys17, Cys21, Cys48, Cys51, Cys54, and Cys58.

As to quaternary structure, the eukaryotic PSI reaction center is composed of at least 11 subunits. [4Fe-4S] cluster serves as cofactor.

It localises to the plastid. The protein resides in the chloroplast thylakoid membrane. The catalysed reaction is reduced [plastocyanin] + hnu + oxidized [2Fe-2S]-[ferredoxin] = oxidized [plastocyanin] + reduced [2Fe-2S]-[ferredoxin]. Its function is as follows. Apoprotein for the two 4Fe-4S centers FA and FB of photosystem I (PSI); essential for photochemical activity. FB is the terminal electron acceptor of PSI, donating electrons to ferredoxin. The C-terminus interacts with PsaA/B/D and helps assemble the protein into the PSI complex. Required for binding of PsaD and PsaE to PSI. PSI is a plastocyanin/cytochrome c6-ferredoxin oxidoreductase, converting photonic excitation into a charge separation, which transfers an electron from the donor P700 chlorophyll pair to the spectroscopically characterized acceptors A0, A1, FX, FA and FB in turn. This is Photosystem I iron-sulfur center from Euglena gracilis.